The primary structure comprises 446 residues: Phosphoglucosamine mutase (446 aa).

Ser-103 acts as the Phosphoserine intermediate in catalysis. Positions 103, 242, 244, and 246 each coordinate Mg(2+). Ser-103 is modified (phosphoserine).

Belongs to the phosphohexose mutase family. Requires Mg(2+) as cofactor. Activated by phosphorylation.

The enzyme catalyses alpha-D-glucosamine 1-phosphate = D-glucosamine 6-phosphate. Functionally, catalyzes the conversion of glucosamine-6-phosphate to glucosamine-1-phosphate. The polypeptide is Phosphoglucosamine mutase (Vibrio campbellii (strain ATCC BAA-1116)).